We begin with the raw amino-acid sequence, 365 residues long: 3-dehydroquinate synthase (365 aa).

NAD(+) is bound by residues 106-110, 130-131, Lys142, Lys151, and 169-172; these read GVIGD, TT, and FFAT. Residues Glu184, His247, and His264 each coordinate Zn(2+).

The protein belongs to the sugar phosphate cyclases superfamily. Dehydroquinate synthase family. Co(2+) is required as a cofactor. It depends on Zn(2+) as a cofactor. NAD(+) serves as cofactor.

It localises to the cytoplasm. It catalyses the reaction 7-phospho-2-dehydro-3-deoxy-D-arabino-heptonate = 3-dehydroquinate + phosphate. Its pathway is metabolic intermediate biosynthesis; chorismate biosynthesis; chorismate from D-erythrose 4-phosphate and phosphoenolpyruvate: step 2/7. Catalyzes the conversion of 3-deoxy-D-arabino-heptulosonate 7-phosphate (DAHP) to dehydroquinate (DHQ). The protein is 3-dehydroquinate synthase of Listeria welshimeri serovar 6b (strain ATCC 35897 / DSM 20650 / CCUG 15529 / CIP 8149 / NCTC 11857 / SLCC 5334 / V8).